Consider the following 535-residue polypeptide: MTDQTTRLPIRRALISVSDKTGILEFARELEALGVEILSTGGTFKLLQDNGVAAVEVADYTGFAEMMDGRVKTLHPKIHGGILGRRGIDDAIMTEHGIKPIDLVAVNLYPFEATINKPGCDLPTAIENIDIGGPTMVRSAAKNHKDVAIVVNASDYAQVLESLKAGGLTYAQRFDLMLKAFEHTAAYDGMIANYMGTVNQAAETLSTEGRSQFPRTFNSQFIKAQEMRYGENPHQSAAFYVEAKPAEVGIATATQLQGKELSYNNVADTDAALECVKSFVKPACVIVKHANPCGVAVSPDAEGGIRQAYELAYATDTESAFGGIIAFNRELDAETAKAIVERQFVEVIIAPSVSEEARAIVAAKANVRLLACGEWSADRAAAWDYKRVNGGLLVQSRDIGMIGSEDLKVVTKRAPTEQEINDLIFAWKVAKYVKSNAIVYAKNRQTIGVGAGQMSRVNSARIAAIKAEHAGLQVVGSVMASDAFFPFRDGLDNAAKAGVTAVIQPGGSMRDAEVIAAADEAGIAMVFTGMRHFRH.

Residues threonine 6 to valine 151 form the MGS-like domain.

Belongs to the PurH family.

The enzyme catalyses (6R)-10-formyltetrahydrofolate + 5-amino-1-(5-phospho-beta-D-ribosyl)imidazole-4-carboxamide = 5-formamido-1-(5-phospho-D-ribosyl)imidazole-4-carboxamide + (6S)-5,6,7,8-tetrahydrofolate. It carries out the reaction IMP + H2O = 5-formamido-1-(5-phospho-D-ribosyl)imidazole-4-carboxamide. Its pathway is purine metabolism; IMP biosynthesis via de novo pathway; 5-formamido-1-(5-phospho-D-ribosyl)imidazole-4-carboxamide from 5-amino-1-(5-phospho-D-ribosyl)imidazole-4-carboxamide (10-formyl THF route): step 1/1. It functions in the pathway purine metabolism; IMP biosynthesis via de novo pathway; IMP from 5-formamido-1-(5-phospho-D-ribosyl)imidazole-4-carboxamide: step 1/1. This chain is Bifunctional purine biosynthesis protein PurH, found in Pseudomonas fluorescens (strain SBW25).